A 331-amino-acid polypeptide reads, in one-letter code: Phenylalanine--tRNA ligase alpha subunit (331 aa).

Glutamate 258 is a binding site for Mg(2+).

This sequence belongs to the class-II aminoacyl-tRNA synthetase family. Phe-tRNA synthetase alpha subunit type 1 subfamily. Tetramer of two alpha and two beta subunits. The cofactor is Mg(2+).

The protein resides in the cytoplasm. It catalyses the reaction tRNA(Phe) + L-phenylalanine + ATP = L-phenylalanyl-tRNA(Phe) + AMP + diphosphate + H(+). The protein is Phenylalanine--tRNA ligase alpha subunit (pheS) of Synechocystis sp. (strain ATCC 27184 / PCC 6803 / Kazusa).